Reading from the N-terminus, the 442-residue chain is Shufflon protein B (442 aa).

A constant region region spans residues Met-1–Gly-361. The variable region stretch occupies residues Thr-362 to Lys-442.

This is Shufflon protein B from Escherichia coli.